Here is a 226-residue protein sequence, read N- to C-terminus: Ribose-5-phosphate isomerase A (226 aa).

Substrate is bound by residues 28-31 (TGST), 80-83 (DGAD), and 93-96 (KGGG). The Proton acceptor role is filled by E102. Substrate is bound at residue K120.

It belongs to the ribose 5-phosphate isomerase family. Homodimer.

The enzyme catalyses aldehydo-D-ribose 5-phosphate = D-ribulose 5-phosphate. It participates in carbohydrate degradation; pentose phosphate pathway; D-ribose 5-phosphate from D-ribulose 5-phosphate (non-oxidative stage): step 1/1. In terms of biological role, catalyzes the reversible conversion of ribose-5-phosphate to ribulose 5-phosphate. In Caulobacter sp. (strain K31), this protein is Ribose-5-phosphate isomerase A.